A 336-amino-acid chain; its full sequence is MKLSELLNAYSIETEFSNDFEVHALAELNKATPNDISYIDQARYLKLLKDSKAGAVFIRKKESSKVPKRMQALVVDNPHLAFAKASHAFKIPFFKNPESVNEPKHFERVTIMPNVVIGEGVEIGENSLIYPGVVIADGVKIGKNCILYPRVTLYQNTILEDNVTIHAGSVIGGDGFGYAHTALGEHVKIEHVGIVRIQKNVEIGANTAIDRAVFGETLIKEGVKIDNLVQIGHNCVLGEHSIVVSQVGLSGSTTTGRNVVFGGQVGIGGHLHVGEFTQIGGKSAVGKDLPPNTNFAGAIPAMEIHEWHHFLAHLRTNFRKQQKTSLLQKAKGFFKS.

H233 serves as the catalytic Proton acceptor.

Belongs to the transferase hexapeptide repeat family. LpxD subfamily. As to quaternary structure, homotrimer.

The catalysed reaction is a UDP-3-O-[(3R)-3-hydroxyacyl]-alpha-D-glucosamine + a (3R)-hydroxyacyl-[ACP] = a UDP-2-N,3-O-bis[(3R)-3-hydroxyacyl]-alpha-D-glucosamine + holo-[ACP] + H(+). Its pathway is bacterial outer membrane biogenesis; LPS lipid A biosynthesis. Functionally, catalyzes the N-acylation of UDP-3-O-acylglucosamine using 3-hydroxyacyl-ACP as the acyl donor. Is involved in the biosynthesis of lipid A, a phosphorylated glycolipid that anchors the lipopolysaccharide to the outer membrane of the cell. This chain is UDP-3-O-acylglucosamine N-acyltransferase, found in Helicobacter pylori (strain ATCC 700392 / 26695) (Campylobacter pylori).